Reading from the N-terminus, the 312-residue chain is 26S proteasome non-ATPase regulatory subunit 14 (312 aa).

Positions 33–168 (VYISSLALLK…IDAFRTINPQ (136 aa)) constitute an MPN domain. Residues histidine 115, histidine 117, and aspartate 128 each coordinate Zn(2+). Positions 115 to 128 (HSHPGFGCWLSGVD) match the JAMM motif motif.

This sequence belongs to the peptidase M67A family. PSMD14 subfamily. Component of the 19S regulatory cap of the 26S proteasome.

In terms of biological role, metalloprotease component of the 26S proteasome that specifically cleaves 'Lys-63'-linked polyubiquitin chains. The 26S proteasome is involved in the ATP-dependent degradation of ubiquitinated proteins. The function of the 'Lys-63'-specific deubiquitination of the proteasome is unclear. This chain is 26S proteasome non-ATPase regulatory subunit 14 (rpn-11), found in Caenorhabditis elegans.